A 315-amino-acid chain; its full sequence is Protoheme IX farnesyltransferase 1 (315 aa).

Transmembrane regions (helical) follow at residues 30–50, 56–76, 106–126, 132–152, 162–182, 186–206, 249–269, and 289–309; these read PGII…AWIQ, GGPG…LVMA, IPPP…FIML, LTAV…TLWF, VGSF…TGYI, AILL…AIGI, LYID…AIWL, and FFYS…DSFI.

Belongs to the UbiA prenyltransferase family. Protoheme IX farnesyltransferase subfamily. In terms of assembly, interacts with CtaA.

It is found in the cell membrane. It catalyses the reaction heme b + (2E,6E)-farnesyl diphosphate + H2O = Fe(II)-heme o + diphosphate. Its pathway is porphyrin-containing compound metabolism; heme O biosynthesis; heme O from protoheme: step 1/1. In terms of biological role, converts heme B (protoheme IX) to heme O by substitution of the vinyl group on carbon 2 of heme B porphyrin ring with a hydroxyethyl farnesyl side group. The chain is Protoheme IX farnesyltransferase 1 from Bacillus velezensis (strain DSM 23117 / BGSC 10A6 / LMG 26770 / FZB42) (Bacillus amyloliquefaciens subsp. plantarum).